We begin with the raw amino-acid sequence, 294 residues long: NAD kinase (294 aa).

Asp74 functions as the Proton acceptor in the catalytic mechanism. NAD(+) contacts are provided by residues 74–75 (DG), 148–149 (NE), His159, Arg176, Asp178, 189–194 (TAYSLS), and Gln249.

It belongs to the NAD kinase family. A divalent metal cation is required as a cofactor.

It localises to the cytoplasm. The enzyme catalyses NAD(+) + ATP = ADP + NADP(+) + H(+). Functionally, involved in the regulation of the intracellular balance of NAD and NADP, and is a key enzyme in the biosynthesis of NADP. Catalyzes specifically the phosphorylation on 2'-hydroxyl of the adenosine moiety of NAD to yield NADP. The chain is NAD kinase from Vibrio vulnificus (strain YJ016).